We begin with the raw amino-acid sequence, 152 residues long: Nucleoside diphosphate kinase (152 aa).

ATP-binding residues include Lys12, Phe60, Arg88, Thr94, Arg105, and Asn115. His118 serves as the catalytic Pros-phosphohistidine intermediate.

The protein belongs to the NDK family. In terms of assembly, homotrimer. It depends on Mg(2+) as a cofactor.

It carries out the reaction a 2'-deoxyribonucleoside 5'-diphosphate + ATP = a 2'-deoxyribonucleoside 5'-triphosphate + ADP. It catalyses the reaction a ribonucleoside 5'-diphosphate + ATP = a ribonucleoside 5'-triphosphate + ADP. In terms of biological role, major role in the synthesis of nucleoside triphosphates other than ATP. The ATP gamma phosphate is transferred to the NDP beta phosphate via a ping-pong mechanism, using a phosphorylated active-site intermediate. The protein is Nucleoside diphosphate kinase (ndk-1) of Neurospora crassa (strain ATCC 24698 / 74-OR23-1A / CBS 708.71 / DSM 1257 / FGSC 987).